Here is a 196-residue protein sequence, read N- to C-terminus: Nodulation protein A (196 aa).

This sequence belongs to the NodA family.

The protein localises to the cytoplasm. In terms of biological role, N-acyltransferase required for nodulation. Acts in the production of a small, heat-stable compound (Nod) that stimulates mitosis in various plant protoplasts. In Mesorhizobium plurifarium, this protein is Nodulation protein A.